A 176-amino-acid chain; its full sequence is Cystatin-related protein 2 (176 aa).

Residues 1–26 form the signal peptide; that stretch reads MYKTLCGTQLLLAIFVLFLNFSHATA. Positions 27-30 are excised as a propeptide; sequence KGTR. A glycan (N-linked (GlcNAc...) asparagine) is linked at Asn71. 2 disulfides stabilise this stretch: Cys129–Cys139 and Cys153–Cys173.

This sequence belongs to the cystatin family. In terms of tissue distribution, prostate.

This is Cystatin-related protein 2 (Crp2) from Rattus norvegicus (Rat).